A 302-amino-acid chain; its full sequence is MPEATDLEELKRGTDLVKRGFARMQKGGVIMDVVTREQARIAEDTGAVAVMALEAVPADIRKRGGVARMPDPENVTEIIDEVSIPVMGKSRIGHRKEAEILESLGVDMIDESEVLTPADDEYHTDKRDFASPFVCGARDLPEALRRIREGAAMIRTKGEAGTGDVNQAVKHQRTIKTQIRTLTGLNHEEREKWAREHGAPRDLVHETAEAGRLPVVNFAAGGIATPADAALMMYHGCDGIFVGSGIFGAEDPEAMGTAIVEAVNNWDDPDELADIASGIGKGMKGQSNEDLPDEEKLQGRGV.

A D-ribose 5-phosphate-binding site is contributed by Asp-32. Catalysis depends on Lys-89, which acts as the Schiff-base intermediate with D-ribose 5-phosphate. Residue Gly-161 participates in D-ribose 5-phosphate binding. A D-glyceraldehyde 3-phosphate-binding site is contributed by Arg-173. Residues Gly-222 and 243–244 (GS) contribute to the D-ribose 5-phosphate site. The segment at 278–302 (GIGKGMKGQSNEDLPDEEKLQGRGV) is disordered.

The protein belongs to the PdxS/SNZ family. As to quaternary structure, in the presence of PdxT, forms a dodecamer of heterodimers.

The catalysed reaction is aldehydo-D-ribose 5-phosphate + D-glyceraldehyde 3-phosphate + L-glutamine = pyridoxal 5'-phosphate + L-glutamate + phosphate + 3 H2O + H(+). Its pathway is cofactor biosynthesis; pyridoxal 5'-phosphate biosynthesis. Catalyzes the formation of pyridoxal 5'-phosphate from ribose 5-phosphate (RBP), glyceraldehyde 3-phosphate (G3P) and ammonia. The ammonia is provided by the PdxT subunit. Can also use ribulose 5-phosphate and dihydroxyacetone phosphate as substrates, resulting from enzyme-catalyzed isomerization of RBP and G3P, respectively. This Halorubrum lacusprofundi (strain ATCC 49239 / DSM 5036 / JCM 8891 / ACAM 34) protein is Pyridoxal 5'-phosphate synthase subunit PdxS.